A 286-amino-acid polypeptide reads, in one-letter code: MDWYVGTEWEDKNRGLAKKVIGLQFTEMDKPTIISTVEFSVNKKATNLGGRPSKYLVSDESATYPQKHSLEMGTSLTAVDCYLELLLQQFVPGETAACSITTKTGERIEFELKLEKIVKNTQVEKLSAAEIYEVALRLKESGVATFKTFPKFAFDYFVRAAKLLITYKPFDKLTKKTNGINGQAVEELFIQIQTNLAACLLQEKRYEHVIYHTQFVETEESPSEKSIYRRALAYYHLKEFAKAQATIERMPNYEEKREFSKLRDNIAVSWKDSKAHYKEVVQRMFS.

Interacts with dco (via nuclear localization signal). Interacts with Ankrd49; interaction promotes the stability of both complex members.

It localises to the cytoplasm. The protein localises to the cytosol. The protein resides in the cell membrane. In terms of biological role, functions in planar polarity establishment and circadian rhythms by promoting the activity and localization of dco/dbt. Required for regulating the levels of dco/dbt and per in the nuclei of photoreceptor cells and thereby is involved in normal oscillations of the circadian clock proteins in the eye. In the dark, the cry circadian and rhodopsin visual pathways, activate the accumulation of the protein into Arr1- and Arr2-dependent cytosolic foci which are required for dco localization to photoreceptor nuclei. It is possible that the accumulation into foci results in the dissociation of the protein from dco, thus allowing dco to interact with importins and microtubles for nuclear transport. By promoting nuclei localization and kinase activity of dco towards per, it is essential for regulating normal cycles of per nuclear accumulation in brain circadian neurons and thus is important for normal circadian behavior. Essential for regulating the establishment of planar cell polarity in the wing. Forms a complex with Ankrd49 which likely functions in the regulation of planar polarity by promoting the activity of dco during planar polarity establishment. Within the complex, directly promotes dco activity in regulating phosphorylation and asymmetric localization of core planar polarity proteins such as dsh. The polypeptide is Protein Bride of doubletime (Drosophila melanogaster (Fruit fly)).